A 417-amino-acid chain; its full sequence is DnaJ protein homolog ANJ1 (417 aa).

The 66-residue stretch at 11-76 folds into the J domain; that stretch reads STRYYEILGV…REIYDQYGED (66 aa). A CR-type zinc finger spans residues 135–219; the sequence is GTTKKLSLSR…CKGEKVVQEK (85 aa). CXXCXGXG motif repeat units follow at residues 148 to 155, 164 to 171, and 191 to 198; these read CSKCTGKG, CSGCQGTG, and CNECKGTG. The stretch at 207 to 214 is one CXXCXGXG motif; approximate repeat; it reads CPQCKGEK. The interval 384–417 is disordered; the sequence is IEEEMKRKQTQAQQEAYDEDDEPAGGQRVQCAQQ. Cysteine methyl ester is present on Cys414. Residue Cys414 is the site of S-farnesyl cysteine attachment. Residues 415–417 constitute a propeptide, removed in mature form; it reads AQQ.

The protein resides in the membrane. Functionally, plays a continuous role in plant development probably in the structural organization of compartments. This is DnaJ protein homolog ANJ1 from Atriplex nummularia (Old man saltbush).